Consider the following 251-residue polypeptide: tRNA (guanine-N(1)-)-methyltransferase (251 aa).

Residues G117 and 137–142 (IGDYVL) contribute to the S-adenosyl-L-methionine site.

This sequence belongs to the RNA methyltransferase TrmD family. In terms of assembly, homodimer.

It is found in the cytoplasm. It carries out the reaction guanosine(37) in tRNA + S-adenosyl-L-methionine = N(1)-methylguanosine(37) in tRNA + S-adenosyl-L-homocysteine + H(+). Specifically methylates guanosine-37 in various tRNAs. This Actinobacillus pleuropneumoniae serotype 5b (strain L20) protein is tRNA (guanine-N(1)-)-methyltransferase.